Reading from the N-terminus, the 264-residue chain is S-adenosylmethionine decarboxylase proenzyme (264 aa).

Serine 112 (schiff-base intermediate with substrate; via pyruvic acid) is an active-site residue. Pyruvic acid (Ser); by autocatalysis is present on serine 112. Histidine 117 acts as the Proton acceptor; for processing activity in catalysis. Cysteine 140 (proton donor; for catalytic activity) is an active-site residue.

Belongs to the prokaryotic AdoMetDC family. Type 2 subfamily. As to quaternary structure, heterooctamer of four alpha and four beta chains arranged as a tetramer of alpha/beta heterodimers. Pyruvate is required as a cofactor. Post-translationally, is synthesized initially as an inactive proenzyme. Formation of the active enzyme involves a self-maturation process in which the active site pyruvoyl group is generated from an internal serine residue via an autocatalytic post-translational modification. Two non-identical subunits are generated from the proenzyme in this reaction, and the pyruvate is formed at the N-terminus of the alpha chain, which is derived from the carboxyl end of the proenzyme. The post-translation cleavage follows an unusual pathway, termed non-hydrolytic serinolysis, in which the side chain hydroxyl group of the serine supplies its oxygen atom to form the C-terminus of the beta chain, while the remainder of the serine residue undergoes an oxidative deamination to produce ammonia and the pyruvoyl group blocking the N-terminus of the alpha chain.

The catalysed reaction is S-adenosyl-L-methionine + H(+) = S-adenosyl 3-(methylsulfanyl)propylamine + CO2. The protein operates within amine and polyamine biosynthesis; S-adenosylmethioninamine biosynthesis; S-adenosylmethioninamine from S-adenosyl-L-methionine: step 1/1. Catalyzes the decarboxylation of S-adenosylmethionine to S-adenosylmethioninamine (dcAdoMet), the propylamine donor required for the synthesis of the polyamines spermine and spermidine from the diamine putrescine. The protein is S-adenosylmethionine decarboxylase proenzyme of Shigella dysenteriae serotype 1 (strain Sd197).